Reading from the N-terminus, the 434-residue chain is 3-phosphoshikimate 1-carboxyvinyltransferase (434 aa).

Positions 22, 23, and 27 each coordinate 3-phosphoshikimate. K22 is a binding site for phosphoenolpyruvate. G93 and R121 together coordinate phosphoenolpyruvate. 6 residues coordinate 3-phosphoshikimate: S168, S169, Q170, S199, D320, and K347. Residue Q170 coordinates phosphoenolpyruvate. The active-site Proton acceptor is D320. Phosphoenolpyruvate-binding residues include R351, R394, and K419.

The protein belongs to the EPSP synthase family. As to quaternary structure, monomer.

The protein localises to the cytoplasm. The enzyme catalyses 3-phosphoshikimate + phosphoenolpyruvate = 5-O-(1-carboxyvinyl)-3-phosphoshikimate + phosphate. It functions in the pathway metabolic intermediate biosynthesis; chorismate biosynthesis; chorismate from D-erythrose 4-phosphate and phosphoenolpyruvate: step 6/7. Functionally, catalyzes the transfer of the enolpyruvyl moiety of phosphoenolpyruvate (PEP) to the 5-hydroxyl of shikimate-3-phosphate (S3P) to produce enolpyruvyl shikimate-3-phosphate and inorganic phosphate. This chain is 3-phosphoshikimate 1-carboxyvinyltransferase, found in Burkholderia lata (strain ATCC 17760 / DSM 23089 / LMG 22485 / NCIMB 9086 / R18194 / 383).